We begin with the raw amino-acid sequence, 305 residues long: Ribosomal RNA small subunit methyltransferase H (305 aa).

S-adenosyl-L-methionine contacts are provided by residues G30–H32, D49, F74, D96, and Q103.

The protein belongs to the methyltransferase superfamily. RsmH family.

It is found in the cytoplasm. It carries out the reaction cytidine(1402) in 16S rRNA + S-adenosyl-L-methionine = N(4)-methylcytidine(1402) in 16S rRNA + S-adenosyl-L-homocysteine + H(+). Its function is as follows. Specifically methylates the N4 position of cytidine in position 1402 (C1402) of 16S rRNA. The polypeptide is Ribosomal RNA small subunit methyltransferase H (Francisella tularensis subsp. novicida (strain U112)).